Consider the following 141-residue polypeptide: Large ribosomal subunit protein uL11 (141 aa).

This sequence belongs to the universal ribosomal protein uL11 family. Part of the ribosomal stalk of the 50S ribosomal subunit. Interacts with L10 and the large rRNA to form the base of the stalk. L10 forms an elongated spine to which L12 dimers bind in a sequential fashion forming a multimeric L10(L12)X complex. In terms of processing, one or more lysine residues are methylated.

Functionally, forms part of the ribosomal stalk which helps the ribosome interact with GTP-bound translation factors. The polypeptide is Large ribosomal subunit protein uL11 (Clostridium botulinum (strain Kyoto / Type A2)).